The primary structure comprises 1275 residues: Rho1 guanine nucleotide exchange factor 3 (1275 aa).

4 disordered regions span residues 1-42, 56-113, 131-188, and 214-248; these read MKLS…SFQK, SPPF…NSAA, NNPL…SPYS, and LSPTRSPARTPSPIRLYSSDALRPQSPLSPSVEYL. Over residues 7–17 the composition is skewed to basic and acidic residues; that stretch reads LFHRSSKDHGG. 3 stretches are compositionally biased toward polar residues: residues 32 to 42, 80 to 113, and 142 to 151; these read PHSSSPPSFQK, ASINSRRVASYTVQSSPSRTTYRQLPNEPQNSAA, and SPGNKQNTVD. 2 stretches are compositionally biased toward low complexity: residues 178 to 188 and 214 to 228; these read SSVSSHSSPYS and LSPTRSPARTPSPIR. Ser-293 bears the Phosphoserine mark. One can recognise a DH domain in the interval 465-657; sequence ARQNNIHELI…RATCEECDAV (193 aa). The region spanning 692–855 is the PH domain; that stretch reads EFFFEGIVQR…WVEKINVAKK (164 aa). The region spanning 930–1239 is the CNH domain; that stretch reads YGDISCIAQF…KYYPSNSDWL (310 aa).

The protein resides in the cytoplasm. In terms of biological role, stimulates the exchange of Rho1 GDP-bound form into GTP-bound form. Regulates, via interaction and activation of Rho1, beta-1,3-glucan biosynthesis and cell wall integrity during septation. Involved in the regulation of contractile ring assembly. The protein is Rho1 guanine nucleotide exchange factor 3 (rgf3) of Schizosaccharomyces pombe (strain 972 / ATCC 24843) (Fission yeast).